Reading from the N-terminus, the 392-residue chain is MQAITLLGSTGSIGTQTLDLVAQYPERFQVVGLTSYSNVALLAEQVRRFRPQMVAIGREELLPELRSLLTGIRPLPELVAGTEGLCQVAAHPAAQRVVTGIVGCAGLLPTLAAIRAGKDIALANKETLVAGGPVVLPLVREYGVNLIPVDSEHSAIFQCLQGVPAGSLRRILLTASGGAFRDWPAEKLDQVTLADALKHPNWVMGRKITIDSATLMNKGLEVIEAHWLFGLDYDHIDILIHPQSIVHSLIELADTSVLAQLGWPDMHLPILYGLSWPERLATPWDPLDLVKLGSLTFKAPDHRKYPCMELAYAAGRRGGTLPAVLNAANEAAVALFLQERIRFLDIPRLLERVCERHQVIADPSLEDILQADAWARRETAQLAQQAPAQVLA.

NADPH-binding residues include Thr10, Gly11, Ser12, Ile13, Asn38, and Asn124. Lys125 serves as a coordination point for 1-deoxy-D-xylulose 5-phosphate. Glu126 is an NADPH binding site. Mn(2+) is bound at residue Asp150. Residues Ser151, Glu152, Ser176, and His199 each coordinate 1-deoxy-D-xylulose 5-phosphate. Glu152 contacts Mn(2+). Position 205 (Gly205) interacts with NADPH. 1-deoxy-D-xylulose 5-phosphate-binding residues include Ser212, Asn217, Lys218, and Glu221. Glu221 is a Mn(2+) binding site.

The protein belongs to the DXR family. Mg(2+) serves as cofactor. Requires Mn(2+) as cofactor.

The enzyme catalyses 2-C-methyl-D-erythritol 4-phosphate + NADP(+) = 1-deoxy-D-xylulose 5-phosphate + NADPH + H(+). It participates in isoprenoid biosynthesis; isopentenyl diphosphate biosynthesis via DXP pathway; isopentenyl diphosphate from 1-deoxy-D-xylulose 5-phosphate: step 1/6. Its function is as follows. Catalyzes the NADPH-dependent rearrangement and reduction of 1-deoxy-D-xylulose-5-phosphate (DXP) to 2-C-methyl-D-erythritol 4-phosphate (MEP). This is 1-deoxy-D-xylulose 5-phosphate reductoisomerase from Synechococcus sp. (strain JA-2-3B'a(2-13)) (Cyanobacteria bacterium Yellowstone B-Prime).